The chain runs to 133 residues: Large-conductance mechanosensitive channel (133 aa).

2 helical membrane-spanning segments follow: residues 14-34 (VVDL…VSSL) and 67-87 (GNFI…FMFV).

It belongs to the MscL family. As to quaternary structure, homopentamer.

It is found in the cell membrane. Channel that opens in response to stretch forces in the membrane lipid bilayer. May participate in the regulation of osmotic pressure changes within the cell. The protein is Large-conductance mechanosensitive channel of Bacillus cereus (strain AH187).